Consider the following 261-residue polypeptide: Histone H3-like centromeric protein cpar-1 (261 aa).

A disordered region spans residues 80 to 150 (TVGSNSTNLV…AGSSSSDRVR (71 aa)). Over residues 113–127 (AANSHHQSPINVGNR) the composition is skewed to polar residues. Residues 132–146 (GTNGRNGSRAGSSSS) are compositionally biased toward low complexity. Residues 164 to 261 (YRPGQKALEE…LYRRLCLPNL (98 aa)) form an H3-like region.

This sequence belongs to the histone H3 family. Forms a nucleosome-like histone octamer containing two molecules each of H2A, H2B, cpar-1 and H4 assembled in one cpar-1-H4 heterotetramer and two H2A-H2B heterodimers. Post-translationally, cleaved at the onset of meiotic anaphase I, likely by separase sep-1.

It is found in the nucleus. The protein resides in the chromosome. In terms of biological role, histone H3-like variant which exclusively replaces conventional H3 in the nucleosome core of centromeric chromatin at the inner plate of the kinetochore. Required for recruitment and assembly of kinetochore proteins, mitotic progression and chromosome segregation. May serve as an epigenetic mark that propagates centromere identity through replication and cell division. Not required for chromosome segregation during meiosis. This is Histone H3-like centromeric protein cpar-1 from Caenorhabditis elegans.